The sequence spans 867 residues: Leucine--tRNA ligase (867 aa).

The 'HIGH' region motif lies at 43–53 (PYPSGRLHMGH). The 'KMSKS' region signature appears at 627–631 (KMSKS). Lysine 630 is an ATP binding site.

It belongs to the class-I aminoacyl-tRNA synthetase family.

The protein resides in the cytoplasm. It carries out the reaction tRNA(Leu) + L-leucine + ATP = L-leucyl-tRNA(Leu) + AMP + diphosphate. The polypeptide is Leucine--tRNA ligase (Phenylobacterium zucineum (strain HLK1)).